A 202-amino-acid chain; its full sequence is MAETAASRTGSVSRKTNETSISVSVNLDGTGKSTISTGVGFFDHMLDQLSRHSLIDMEIDAKGDLHIDDHHTVEDTGIAIGQAISKALGDRRGITRYASIDLAMDETMTKAAVDLSGRPFLVWNVAFSAPKIGTFDTELVREFFHALAQNAGITLHILNHYGANNHHIAETCFKAVARALRTATEIDPRQAGRVPSTKGTLV.

Belongs to the imidazoleglycerol-phosphate dehydratase family.

The protein resides in the cytoplasm. It carries out the reaction D-erythro-1-(imidazol-4-yl)glycerol 3-phosphate = 3-(imidazol-4-yl)-2-oxopropyl phosphate + H2O. It functions in the pathway amino-acid biosynthesis; L-histidine biosynthesis; L-histidine from 5-phospho-alpha-D-ribose 1-diphosphate: step 6/9. In Rhizobium johnstonii (strain DSM 114642 / LMG 32736 / 3841) (Rhizobium leguminosarum bv. viciae), this protein is Imidazoleglycerol-phosphate dehydratase.